The chain runs to 645 residues: 1,4-alpha-glucan branching enzyme GlgB (645 aa).

The active-site Nucleophile is D309. The active-site Proton donor is the E352. The tract at residues 619–645 (VKTRKGSKKQDGSKTKVRSNVTSRGKR) is disordered. Over residues 636 to 645 (RSNVTSRGKR) the composition is skewed to polar residues.

Belongs to the glycosyl hydrolase 13 family. GlgB subfamily. As to quaternary structure, monomer.

It carries out the reaction Transfers a segment of a (1-&gt;4)-alpha-D-glucan chain to a primary hydroxy group in a similar glucan chain.. It functions in the pathway glycan biosynthesis; glycogen biosynthesis. Its function is as follows. Catalyzes the formation of the alpha-1,6-glucosidic linkages in glycogen by scission of a 1,4-alpha-linked oligosaccharide from growing alpha-1,4-glucan chains and the subsequent attachment of the oligosaccharide to the alpha-1,6 position. The protein is 1,4-alpha-glucan branching enzyme GlgB of Bacillus cereus (strain G9842).